The chain runs to 720 residues: Inactive serine protease PAMR1 (720 aa).

Positions 1 to 21 (MELGWWPQLGLAFLQLLLISS) are cleaved as a signal peptide. Intrachain disulfides connect Cys128–Cys150, Cys177–Cys199, Cys239–Cys250, Cys244–Cys260, Cys262–Cys271, Cys280–Cys329, Cys315–Cys342, and Cys414–Cys442. One can recognise a CUB domain in the interval 128–236 (CGQVLRVPKG…DGFHAIFEEI (109 aa)). The region spanning 235–272 (EITACSSSPCFHDGTCLLDSTGSYKCACLAGYTGKHCE) is the EGF-like domain. Sushi domains are found at residues 278–344 (RNCS…ICIK) and 387–444 (APTK…SCIP). Positions 445-720 (ICGKTENVSA…FKDWIERNMK (276 aa)) constitute a Peptidase S1 domain. A glycan (N-linked (GlcNAc...) asparagine) is linked at Asn451. Cystine bridges form between Cys489-Cys505, Cys630-Cys649, and Cys661-Cys697.

This sequence belongs to the peptidase S1 family.

It localises to the secreted. May play a role in regeneration of skeletal muscle. The sequence is that of Inactive serine protease PAMR1 (PAMR1) from Bos taurus (Bovine).